The sequence spans 558 residues: UvrABC system protein C (558 aa).

Positions 12–92 (LLPGVYIFYG…IFNHKPKYNV (81 aa)) constitute a GIY-YIG domain. Residues 200-235 (SETLDLIEEKMKKHAKMMDFENAAKYRDLLVKFENV) enclose the UVR domain.

It belongs to the UvrC family. Interacts with UvrB in an incision complex.

The protein resides in the cytoplasm. Its function is as follows. The UvrABC repair system catalyzes the recognition and processing of DNA lesions. UvrC both incises the 5' and 3' sides of the lesion. The N-terminal half is responsible for the 3' incision and the C-terminal half is responsible for the 5' incision. This chain is UvrABC system protein C, found in Pseudothermotoga lettingae (strain ATCC BAA-301 / DSM 14385 / NBRC 107922 / TMO) (Thermotoga lettingae).